The chain runs to 1114 residues: Constitutive coactivator of PPAR-gamma-like protein 1 (1114 aa).

The segment at 339 to 402 is interaction with YES1, SRC and FYN; it reads PPHYLARPNP…YNLAEPALTL (64 aa). Disordered regions lie at residues 372 to 396 and 411 to 519; these read QAKPVAPQVPSPGAPGQGPHPYNLA and EQNY…GNQI. The segment covering 431–443 has biased composition (polar residues); sequence SPINPAPSGSPNH. Residues 477 to 498 show a composition bias toward basic and acidic residues; it reads GWEKTGSHSEPQARGDPGDQTK. The segment covering 499–510 has biased composition (polar residues); sequence AEGSSTASSGSQ. Thr651 is modified (phosphothreonine). The interval 825 to 1114 is RNA binding; the sequence is AEQAAKVEKM…LEAAVLKKEE (290 aa). Residues Arg869, Arg880, and Arg882 each carry the omega-N-methylarginine modification. Residues 918–940 form a disordered region; that stretch reads FSGSDSSRTSKSQGGIQPIPSQG. Lys928 carries the post-translational modification N6-acetyllysine. Residues 929–940 show a composition bias toward low complexity; sequence SQGGIQPIPSQG. Ser956 bears the Phosphoserine mark. Residues Arg978 and Arg982 each carry the omega-N-methylarginine modification. The disordered stretch occupies residues 1009–1099; the sequence is AIQGKPPYAA…LNALSTDSGC (91 aa). The residue at position 1019 (Ser1019) is a Phosphoserine. The span at 1022–1033 shows a compositional bias: basic and acidic residues; that stretch reads EVAKELKSRSGE. A compositionally biased stretch (polar residues) spans 1034-1043; that stretch reads SKSSAMSSDG. 3 positions are modified to phosphoserine: Ser1040, Ser1041, and Ser1044. The segment covering 1060–1097 has biased composition (polar residues); the sequence is MNGSAGDTRAPSHSESALNNDSKTCNTNPHLNALSTDS.

Belongs to the constitutive coactivator of PPAR-gamma family. As to quaternary structure, interacts with PURA. Interacts with YES1, SRC, FYN. Upon tyrosine phosphorylation, interacts with PIK3R1. Arg-978 is dimethylated, probably to asymmetric dimethylarginine. In terms of processing, phosphorylated on tyrosine by src family kinases upon ultraviolet exposure.

Its subcellular location is the cytoplasm. It localises to the cell membrane. Functionally, component of the oxidative stress-induced survival signaling. May regulate the activation of SRC family protein kinases. May act as a scaffolding protein enabling SRC family protein kinases to phosphorylate and activate PI3-kinase. Binds IGF2 RNA and promotes the production of IGF2 protein. The sequence is that of Constitutive coactivator of PPAR-gamma-like protein 1 (FAM120A) from Bos taurus (Bovine).